The following is a 128-amino-acid chain: Fluoride-specific ion channel FluC (128 aa).

4 helical membrane-spanning segments follow: residues 6–26 (LVALGGAIGSAARFTLSGLVL), 36–56 (LPTFTVNIIGCLVIGMLAGLA), 68–88 (VLLFTGLVGGFTTFSAFGLET), and 99–119 (IAAAYIVSSIVVGLVLMWLGF). Na(+) is bound by residues G76 and T79.

This sequence belongs to the fluoride channel Fluc/FEX (TC 1.A.43) family.

The protein resides in the cell inner membrane. The catalysed reaction is fluoride(in) = fluoride(out). Na(+) is not transported, but it plays an essential structural role and its presence is essential for fluoride channel function. Functionally, fluoride-specific ion channel. Important for reducing fluoride concentration in the cell, thus reducing its toxicity. This is Fluoride-specific ion channel FluC from Methylobacillus flagellatus (strain ATCC 51484 / DSM 6875 / VKM B-1610 / KT).